Consider the following 296-residue polypeptide: 33 kDa chaperonin (296 aa).

2 cysteine pairs are disulfide-bonded: Cys-238/Cys-240 and Cys-271/Cys-274.

It belongs to the HSP33 family. In terms of processing, under oxidizing conditions two disulfide bonds are formed involving the reactive cysteines. Under reducing conditions zinc is bound to the reactive cysteines and the protein is inactive.

The protein localises to the cytoplasm. Redox regulated molecular chaperone. Protects both thermally unfolding and oxidatively damaged proteins from irreversible aggregation. Plays an important role in the bacterial defense system toward oxidative stress. This chain is 33 kDa chaperonin, found in Clostridium botulinum (strain Loch Maree / Type A3).